A 224-amino-acid polypeptide reads, in one-letter code: PKHD-type hydroxylase Sbal195_0750 (224 aa).

Residues 78 to 176 (QFYPPLFNRY…RTAAFMWLQS (99 aa)) form the Fe2OG dioxygenase domain. Residues histidine 96, aspartate 98, and histidine 157 each contribute to the Fe cation site. Position 167 (arginine 167) interacts with 2-oxoglutarate.

Fe(2+) serves as cofactor. It depends on L-ascorbate as a cofactor.

This is PKHD-type hydroxylase Sbal195_0750 from Shewanella baltica (strain OS195).